The chain runs to 985 residues: Na(+)/H(+) antiporter (985 aa).

Over 1–12 (MAIWEQLEVSKA) the chain is Cytoplasmic. Residues 13–33 (HVAYACVGVFSSIFSLVSLYV) form a helical membrane-spanning segment. Residues 34–36 (KEK) are Extracellular-facing. The chain crosses the membrane as a helical span at residues 37–57 (LYIGESTVAGIFGLIVGPVCL). The Cytoplasmic segment spans residues 58–70 (NWFNPLKWGNSDS). Residues 71–91 (ITLEITRIVLCLQIFAVAVEL) form a helical membrane-spanning segment. Residues 92-105 (PRKYMLKHWVSVTM) are Extracellular-facing. The helical transmembrane segment at 106 to 126 (LLLPVMTAGWLIIGLFVWILI) threads the bilayer. The Cytoplasmic portion of the chain corresponds to 127-128 (PG). Residues 129-149 (LNFSASLLISACITATDPILA) form a helical membrane-spanning segment. Over 150-176 (QSVVSGKFAQRVPGHLRNLLSAESGCN) the chain is Extracellular. Residues 177-197 (DGMAFPFLFLSMNLILHPGNG) traverse the membrane as a helical segment. Over 198–203 (REIVKD) the chain is Cytoplasmic. A helical membrane pass occupies residues 204-224 (WICVTILYECLFGCLLGCFIG). Topologically, residues 225–244 (YVGRITIRFAEKKNIIDRES) are extracellular. A helical membrane pass occupies residues 245–265 (FLAFYVVLAFMCAGFGSILGV). At 266 to 294 (DDLLVSFAAGATFAWDGWFSQKTQESNVS) the chain is on the cytoplasmic side. Residues 295-315 (TVIDLLLNYAYFIYFGAIIPW) form a helical membrane-spanning segment. The Extracellular portion of the chain corresponds to 316-319 (SQFN). Residues 320 to 340 (NGEIGTNVWRLIILSIVVIFL) form a helical membrane-spanning segment. Residues 341–361 (RRIPAVMILRPLIPDIKSWRE) lie on the Cytoplasmic side of the membrane. A helical membrane pass occupies residues 362 to 382 (ALFVGHFGPIGVGAIFAAILA). Over 383 to 410 (RGELESTFSDEPTPLNVVPSKEESKHWQ) the chain is Extracellular. A helical membrane pass occupies residues 411–431 (LIACIWPITCFFIVTSIIVHG). Topologically, residues 432–985 (SSVAIITLGR…ALSKTLGLNK (554 aa)) are cytoplasmic. Disordered regions lie at residues 489-701 (MTLS…KPGT) and 726-760 (DRNE…GGRL). Positions 517–526 (NNDQIGSVAT) are enriched in polar residues. Residues 538 to 558 (PRRRKLSRKEKRLNRRQKLRN) are compositionally biased toward basic residues. Composition is skewed to basic and acidic residues over residues 559-572 (KGRE…KNEM) and 580-593 (DLGR…KEAR). Residue serine 568 is modified to Phosphoserine. The segment covering 637–646 (SFESSERSSS) has biased composition (low complexity). Residues 661 to 675 (EETESEIESEDEMEN) show a composition bias toward acidic residues. The segment covering 676–698 (ESERSMASSEERRIRKMKEEEMK) has biased composition (basic and acidic residues). Over residues 743–756 (SSLTTTMTNLSSSS) the composition is skewed to low complexity. Position 765 is a phosphothreonine (threonine 765). Phosphoserine is present on residues serine 768 and serine 774. The segment at 812–985 (INPHKSDDDK…ALSKTLGLNK (174 aa)) is disordered. Basic and acidic residues-rich tracts occupy residues 815–828 (HKSD…RPRN) and 854–863 (DEEKAIEGPS). Positions 887 to 920 (LDLEDEPSSEEDLGDSYNMDDSEDYDDNAYESET) are enriched in acidic residues. Residues 970-979 (SAAVKSALSK) show a composition bias toward low complexity.

This sequence belongs to the fungal Na(+)/H(+) exchanger family.

It localises to the cell membrane. Its function is as follows. Sodium export from cell, takes up external protons in exchange for internal sodium ions. Also capable of exporting potassium ions. The chain is Na(+)/H(+) antiporter (NHA1) from Saccharomyces cerevisiae (strain ATCC 204508 / S288c) (Baker's yeast).